Here is a 294-residue protein sequence, read N- to C-terminus: Acetyl-coenzyme A carboxylase carboxyl transferase subunit beta (294 aa).

One can recognise a CoA carboxyltransferase N-terminal domain in the interval L29–A294. C33, C36, C52, and C55 together coordinate Zn(2+). A C4-type zinc finger spans residues C33–C55.

The protein belongs to the AccD/PCCB family. As to quaternary structure, acetyl-CoA carboxylase is a heterohexamer composed of biotin carboxyl carrier protein (AccB), biotin carboxylase (AccC) and two subunits each of ACCase subunit alpha (AccA) and ACCase subunit beta (AccD). The cofactor is Zn(2+).

It is found in the cytoplasm. The catalysed reaction is N(6)-carboxybiotinyl-L-lysyl-[protein] + acetyl-CoA = N(6)-biotinyl-L-lysyl-[protein] + malonyl-CoA. It participates in lipid metabolism; malonyl-CoA biosynthesis; malonyl-CoA from acetyl-CoA: step 1/1. Functionally, component of the acetyl coenzyme A carboxylase (ACC) complex. Biotin carboxylase (BC) catalyzes the carboxylation of biotin on its carrier protein (BCCP) and then the CO(2) group is transferred by the transcarboxylase to acetyl-CoA to form malonyl-CoA. This chain is Acetyl-coenzyme A carboxylase carboxyl transferase subunit beta, found in Prochlorococcus marinus (strain NATL2A).